The following is a 1137-amino-acid chain: Isoleucine--tRNA ligase (1137 aa).

The short motif at 50 to 60 (PSANGMPGIHH) is the 'HIGH' region element. The short motif at 688 to 692 (KMSKR) is the 'KMSKS' region element. Lysine 691 is an ATP binding site.

The protein belongs to the class-I aminoacyl-tRNA synthetase family. IleS type 2 subfamily. In terms of assembly, monomer. The cofactor is Zn(2+).

The protein localises to the cytoplasm. The enzyme catalyses tRNA(Ile) + L-isoleucine + ATP = L-isoleucyl-tRNA(Ile) + AMP + diphosphate. Its function is as follows. Catalyzes the attachment of isoleucine to tRNA(Ile). As IleRS can inadvertently accommodate and process structurally similar amino acids such as valine, to avoid such errors it has two additional distinct tRNA(Ile)-dependent editing activities. One activity is designated as 'pretransfer' editing and involves the hydrolysis of activated Val-AMP. The other activity is designated 'posttransfer' editing and involves deacylation of mischarged Val-tRNA(Ile). This chain is Isoleucine--tRNA ligase, found in Porphyromonas gingivalis (strain ATCC BAA-308 / W83).